A 366-amino-acid chain; its full sequence is Phospho-N-acetylmuramoyl-pentapeptide-transferase (366 aa).

Helical transmembrane passes span 27–47 (AALF…INSL), 71–91 (TPTM…LLWA), 93–113 (LSNV…AIGF), 134–154 (LGIE…TALA), 174–194 (FLIN…VGAG), 205–225 (GLAI…AYLA), 245–265 (LAVV…FNAP), 268–288 (AIFM…TVAV), 294–314 (IVMA…IIQV), and 343–363 (QVVI…LSTL).

The protein belongs to the glycosyltransferase 4 family. MraY subfamily. The cofactor is Mg(2+).

It is found in the cell inner membrane. The catalysed reaction is UDP-N-acetyl-alpha-D-muramoyl-L-alanyl-gamma-D-glutamyl-meso-2,6-diaminopimeloyl-D-alanyl-D-alanine + di-trans,octa-cis-undecaprenyl phosphate = di-trans,octa-cis-undecaprenyl diphospho-N-acetyl-alpha-D-muramoyl-L-alanyl-D-glutamyl-meso-2,6-diaminopimeloyl-D-alanyl-D-alanine + UMP. It participates in cell wall biogenesis; peptidoglycan biosynthesis. Its function is as follows. Catalyzes the initial step of the lipid cycle reactions in the biosynthesis of the cell wall peptidoglycan: transfers peptidoglycan precursor phospho-MurNAc-pentapeptide from UDP-MurNAc-pentapeptide onto the lipid carrier undecaprenyl phosphate, yielding undecaprenyl-pyrophosphoryl-MurNAc-pentapeptide, known as lipid I. The polypeptide is Phospho-N-acetylmuramoyl-pentapeptide-transferase (Rhizobium etli (strain CIAT 652)).